Reading from the N-terminus, the 1396-residue chain is DNA-directed RNA polymerase subunit beta' (1396 aa).

4 residues coordinate Zn(2+): cysteine 70, cysteine 72, cysteine 85, and cysteine 88. Aspartate 460, aspartate 462, and aspartate 464 together coordinate Mg(2+). The Zn(2+) site is built by cysteine 814, cysteine 889, cysteine 896, and cysteine 899.

The protein belongs to the RNA polymerase beta' chain family. As to quaternary structure, the RNAP catalytic core consists of 2 alpha, 1 beta, 1 beta' and 1 omega subunit. When a sigma factor is associated with the core the holoenzyme is formed, which can initiate transcription. Requires Mg(2+) as cofactor. Zn(2+) serves as cofactor.

The catalysed reaction is RNA(n) + a ribonucleoside 5'-triphosphate = RNA(n+1) + diphosphate. DNA-dependent RNA polymerase catalyzes the transcription of DNA into RNA using the four ribonucleoside triphosphates as substrates. In Hahella chejuensis (strain KCTC 2396), this protein is DNA-directed RNA polymerase subunit beta'.